Reading from the N-terminus, the 340-residue chain is 4-hydroxythreonine-4-phosphate dehydrogenase (340 aa).

Residue Thr135 participates in substrate binding. Residues His170, His215, and His276 each coordinate a divalent metal cation. Residues Lys284, Asn293, and Arg302 each coordinate substrate.

This sequence belongs to the PdxA family. In terms of assembly, homodimer. A divalent metal cation serves as cofactor.

The protein localises to the cytoplasm. It catalyses the reaction 4-(phosphooxy)-L-threonine + NAD(+) = 3-amino-2-oxopropyl phosphate + CO2 + NADH. It participates in cofactor biosynthesis; pyridoxine 5'-phosphate biosynthesis; pyridoxine 5'-phosphate from D-erythrose 4-phosphate: step 4/5. Functionally, catalyzes the NAD(P)-dependent oxidation of 4-(phosphooxy)-L-threonine (HTP) into 2-amino-3-oxo-4-(phosphooxy)butyric acid which spontaneously decarboxylates to form 3-amino-2-oxopropyl phosphate (AHAP). This chain is 4-hydroxythreonine-4-phosphate dehydrogenase, found in Synechococcus sp. (strain JA-2-3B'a(2-13)) (Cyanobacteria bacterium Yellowstone B-Prime).